Reading from the N-terminus, the 341-residue chain is Anthranilate phosphoribosyltransferase (341 aa).

5-phospho-alpha-D-ribose 1-diphosphate is bound by residues Gly-84, 87-88 (GD), Thr-92, 94-97 (NIST), 112-120 (KHGNRSVSS), and Ser-124. Gly-84 serves as a coordination point for anthranilate. Residue Ser-96 coordinates Mg(2+). Asn-115 contributes to the anthranilate binding site. Residue Arg-170 coordinates anthranilate. Asp-229 and Glu-230 together coordinate Mg(2+).

It belongs to the anthranilate phosphoribosyltransferase family. In terms of assembly, homodimer. The cofactor is Mg(2+).

It carries out the reaction N-(5-phospho-beta-D-ribosyl)anthranilate + diphosphate = 5-phospho-alpha-D-ribose 1-diphosphate + anthranilate. Its pathway is amino-acid biosynthesis; L-tryptophan biosynthesis; L-tryptophan from chorismate: step 2/5. Catalyzes the transfer of the phosphoribosyl group of 5-phosphorylribose-1-pyrophosphate (PRPP) to anthranilate to yield N-(5'-phosphoribosyl)-anthranilate (PRA). This is Anthranilate phosphoribosyltransferase from Polynucleobacter necessarius subsp. necessarius (strain STIR1).